The following is a 469-amino-acid chain: CBL-interacting serine/threonine-protein kinase 16 (469 aa).

The Protein kinase domain occupies 15–278 (YNIGRLLGTG…MSEIKMIPWF (264 aa)). ATP-binding positions include 21–29 (LGTGNFAKV) and K44. The Proton acceptor role is filled by D139. Residues 157 to 193 (DFGLSALMMPEGLGGRRGSSDDLLHTRCGTPAYVAPE) are activation loop. S161 is modified (phosphoserine). Position 182 is a phosphothreonine (T182). The tract at residues 290 to 320 (IDETIPSPPEPPTKKKKKDLNEKEDDGASPR) is disordered. The region spanning 317–342 (ASPRSFNAFQFITSMSSGFDLSNLFE) is the NAF domain. The interval 346–376 (KPKRMFTSKFPAKSVKERLETAAREMDMRVK) is PPI. A disordered region spans residues 447–469 (DDEDDVTTNDNVDTNDNKINNVS). The span at 454 to 469 (TNDNVDTNDNKINNVS) shows a compositional bias: low complexity.

It belongs to the protein kinase superfamily. CAMK Ser/Thr protein kinase family. SNF1 subfamily. In terms of assembly, part of a K(+)-channel calcium-sensing kinase/phosphatase complex composed by a calcium sensor CBL (CBL1, CBL2, CBL3 or CBL9), a kinase CIPK (CIPK6, CIPK16 or CIPK23), a phosphatase PP2C (AIP1) and a K(+)-channel (AKT1). Interacts with AKT1, CBL1, CBL2, CBL3 and CBL9. The cofactor is Mn(2+).

It carries out the reaction L-seryl-[protein] + ATP = O-phospho-L-seryl-[protein] + ADP + H(+). The catalysed reaction is L-threonyl-[protein] + ATP = O-phospho-L-threonyl-[protein] + ADP + H(+). CIPK serine-threonine protein kinases interact with CBL proteins. Binding of a CBL protein to the regulatory NAF domain of CIPK protein lead to the activation of the kinase in a calcium-dependent manner. Downstream of CBL1, CBL2, CBL3 and CBL9, regulates by phosphorylation the K(+) conductance and uptake of AKT1. This chain is CBL-interacting serine/threonine-protein kinase 16 (CIPK16), found in Arabidopsis thaliana (Mouse-ear cress).